The chain runs to 208 residues: Small ribosomal subunit protein uS4 (208 aa).

One can recognise an S4 RNA-binding domain in the interval 98 to 168 (RRLDNVVFRL…DSLDTVVRRG (71 aa)).

This sequence belongs to the universal ribosomal protein uS4 family. Part of the 30S ribosomal subunit. Contacts protein S5. The interaction surface between S4 and S5 is involved in control of translational fidelity.

Its function is as follows. One of the primary rRNA binding proteins, it binds directly to 16S rRNA where it nucleates assembly of the body of the 30S subunit. In terms of biological role, with S5 and S12 plays an important role in translational accuracy. The protein is Small ribosomal subunit protein uS4 of Desulforapulum autotrophicum (strain ATCC 43914 / DSM 3382 / VKM B-1955 / HRM2) (Desulfobacterium autotrophicum).